A 108-amino-acid polypeptide reads, in one-letter code: UPF0235 protein RB8260 (108 aa).

Belongs to the UPF0235 family.

The polypeptide is UPF0235 protein RB8260 (Rhodopirellula baltica (strain DSM 10527 / NCIMB 13988 / SH1)).